We begin with the raw amino-acid sequence, 532 residues long: E3 ubiquitin-protein ligase MGRN1 (532 aa).

Glycine 2 is lipidated: N-myristoyl glycine. The segment at 277–316 (ECVVCLSDLRDTLILPCRHLCLCTSCADTLRYQANNCPIC) adopts an RING-type zinc-finger fold. A Required for TSG101-binding motif is present at residues 384–387 (PSAP). The residue at position 389 (tyrosine 389) is a Phosphotyrosine. Positions 419-518 (LQKGKTQSKS…QPVPPADIYL (100 aa)) are disordered. Polar residues predominate over residues 422–435 (GKTQSKSPDSTLRS). Serine 428, serine 449, serine 452, and serine 501 each carry phosphoserine. A compositionally biased stretch (acidic residues) spans 442 to 453 (EEDEEKLSEDSD).

In terms of assembly, interacts with MC1R and MC4R. Interacts with TSG101. Interacts with mislocalized cytosolically exposed PRNP; this interaction alters MGRN1 subcellular location and causes lysosomal enlargement. Autoubiquitinated in vitro. Widely expressed, with highest levels in brain, heart, kidney and liver. In the CNS, especially prominent in the Purkinje cells of the cerebellum. In the skin, expressed in the basal layer of the epidermis and hair follicles, primarily in the outer root sheath. Isoforms 1, 3, 4 and 5 are equally expressed in the liver. Isoforms 1, 3 and 4 are most abundant in brain, kidney and heart, respectively.

It localises to the early endosome. Its subcellular location is the cytoplasm. The protein localises to the cell membrane. It is found in the nucleus. The enzyme catalyses S-ubiquitinyl-[E2 ubiquitin-conjugating enzyme]-L-cysteine + [acceptor protein]-L-lysine = [E2 ubiquitin-conjugating enzyme]-L-cysteine + N(6)-ubiquitinyl-[acceptor protein]-L-lysine.. Its pathway is protein modification; protein ubiquitination. E3 ubiquitin-protein ligase. Mediates TSG101 monoubiquitination at multiple sites. Plays a role in the regulation of endosome-to-lysosome trafficking. Impairs MC1R- and MC4R-signaling by competing with GNAS-binding to MCRs and inhibiting agonist-induced cAMP production. Does not inhibit ADRB2-signaling. Does not promote MC1R ubiquitination. Also acts as a negative regulator of hedgehog signaling. The sequence is that of E3 ubiquitin-protein ligase MGRN1 (Mgrn1) from Mus musculus (Mouse).